We begin with the raw amino-acid sequence, 297 residues long: Phosphatidylserine decarboxylase proenzyme (297 aa).

Active-site charge relay system; for autoendoproteolytic cleavage activity residues include D92, H149, and S254. S254 functions as the Schiff-base intermediate with substrate; via pyruvic acid; for decarboxylase activity in the catalytic mechanism. S254 is subject to Pyruvic acid (Ser); by autocatalysis.

The protein belongs to the phosphatidylserine decarboxylase family. PSD-B subfamily. Prokaryotic type I sub-subfamily. In terms of assembly, heterodimer of a large membrane-associated beta subunit and a small pyruvoyl-containing alpha subunit. Pyruvate serves as cofactor. Post-translationally, is synthesized initially as an inactive proenzyme. Formation of the active enzyme involves a self-maturation process in which the active site pyruvoyl group is generated from an internal serine residue via an autocatalytic post-translational modification. Two non-identical subunits are generated from the proenzyme in this reaction, and the pyruvate is formed at the N-terminus of the alpha chain, which is derived from the carboxyl end of the proenzyme. The autoendoproteolytic cleavage occurs by a canonical serine protease mechanism, in which the side chain hydroxyl group of the serine supplies its oxygen atom to form the C-terminus of the beta chain, while the remainder of the serine residue undergoes an oxidative deamination to produce ammonia and the pyruvoyl prosthetic group on the alpha chain. During this reaction, the Ser that is part of the protease active site of the proenzyme becomes the pyruvoyl prosthetic group, which constitutes an essential element of the active site of the mature decarboxylase.

It localises to the cell membrane. It carries out the reaction a 1,2-diacyl-sn-glycero-3-phospho-L-serine + H(+) = a 1,2-diacyl-sn-glycero-3-phosphoethanolamine + CO2. It functions in the pathway phospholipid metabolism; phosphatidylethanolamine biosynthesis; phosphatidylethanolamine from CDP-diacylglycerol: step 2/2. In terms of biological role, catalyzes the formation of phosphatidylethanolamine (PtdEtn) from phosphatidylserine (PtdSer). This Bordetella bronchiseptica (strain ATCC BAA-588 / NCTC 13252 / RB50) (Alcaligenes bronchisepticus) protein is Phosphatidylserine decarboxylase proenzyme.